Here is a 1391-residue protein sequence, read N- to C-terminus: DNA-directed RNA polymerase subunit beta' (1391 aa).

Residues cysteine 72, cysteine 74, cysteine 87, and cysteine 90 each coordinate Zn(2+). Mg(2+) is bound by residues aspartate 462, aspartate 464, and aspartate 466. 4 residues coordinate Zn(2+): cysteine 816, cysteine 890, cysteine 897, and cysteine 900.

The protein belongs to the RNA polymerase beta' chain family. In terms of assembly, the RNAP catalytic core consists of 2 alpha, 1 beta, 1 beta' and 1 omega subunit. When a sigma factor is associated with the core the holoenzyme is formed, which can initiate transcription. Mg(2+) is required as a cofactor. The cofactor is Zn(2+).

It carries out the reaction RNA(n) + a ribonucleoside 5'-triphosphate = RNA(n+1) + diphosphate. Its function is as follows. DNA-dependent RNA polymerase catalyzes the transcription of DNA into RNA using the four ribonucleoside triphosphates as substrates. This is DNA-directed RNA polymerase subunit beta' from Neisseria gonorrhoeae (strain NCCP11945).